Here is a 305-residue protein sequence, read N- to C-terminus: Serine/threonine-protein phosphatase ppe1 (305 aa).

The Mn(2+) site is built by Asp-51, His-53, Asp-79, and Asn-111. The active-site Proton donor is the His-112. His-161 and His-235 together coordinate Mn(2+).

This sequence belongs to the PPP phosphatase family. PP-6 (PP-V) subfamily. As to quaternary structure, interacts with sts5, ekc1 and mis12. It depends on Mn(2+) as a cofactor.

It is found in the nucleus. It catalyses the reaction O-phospho-L-seryl-[protein] + H2O = L-seryl-[protein] + phosphate. The catalysed reaction is O-phospho-L-threonyl-[protein] + H2O = L-threonyl-[protein] + phosphate. In terms of biological role, has a role in chromosome segregation. May provide a dynamic connection between kinetochore microtubules and kinetochore chromatin. Negatively regulates mis12. The protein is Serine/threonine-protein phosphatase ppe1 (ppe1) of Schizosaccharomyces pombe (strain 972 / ATCC 24843) (Fission yeast).